The chain runs to 268 residues: Glucosamine-6-phosphate deaminase (268 aa).

Asp-72 functions as the Proton acceptor; for enolization step in the catalytic mechanism. Asp-141 functions as the For ring-opening step in the catalytic mechanism. His-143 serves as the catalytic Proton acceptor; for ring-opening step. Catalysis depends on Glu-148, which acts as the For ring-opening step.

Belongs to the glucosamine/galactosamine-6-phosphate isomerase family. NagB subfamily. In terms of assembly, homohexamer.

The catalysed reaction is alpha-D-glucosamine 6-phosphate + H2O = beta-D-fructose 6-phosphate + NH4(+). The protein operates within amino-sugar metabolism; N-acetylneuraminate degradation; D-fructose 6-phosphate from N-acetylneuraminate: step 5/5. Allosterically activated by N-acetylglucosamine 6-phosphate (GlcNAc6P). Functionally, catalyzes the reversible isomerization-deamination of glucosamine 6-phosphate (GlcN6P) to form fructose 6-phosphate (Fru6P) and ammonium ion. In Proteus mirabilis (strain HI4320), this protein is Glucosamine-6-phosphate deaminase.